The primary structure comprises 87 residues: Keratin-associated protein 7-1 (87 aa).

Residues Gly-43–Tyr-84 are 11 X 2 AA repeats of G-[YCGS].

It belongs to the KRTAP type 7 family. In terms of assembly, interacts with hair keratins. Expressed in the upper portion of the hair cortex.

In the hair cortex, hair keratin intermediate filaments are embedded in an interfilamentous matrix, consisting of hair keratin-associated proteins (KRTAP), which are essential for the formation of a rigid and resistant hair shaft through their extensive disulfide bond cross-linking with abundant cysteine residues of hair keratins. The matrix proteins include the high-sulfur and high-glycine-tyrosine keratins. This Homo sapiens (Human) protein is Keratin-associated protein 7-1 (KRTAP7-1).